Consider the following 101-residue polypeptide: Urease subunit beta (101 aa).

Belongs to the urease beta subunit family. Heterotrimer of UreA (gamma), UreB (beta) and UreC (alpha) subunits. Three heterotrimers associate to form the active enzyme.

It is found in the cytoplasm. It carries out the reaction urea + 2 H2O + H(+) = hydrogencarbonate + 2 NH4(+). It functions in the pathway nitrogen metabolism; urea degradation; CO(2) and NH(3) from urea (urease route): step 1/1. This is Urease subunit beta from Burkholderia thailandensis (strain ATCC 700388 / DSM 13276 / CCUG 48851 / CIP 106301 / E264).